Reading from the N-terminus, the 274-residue chain is NADH-ubiquinone oxidoreductase chain 2 (274 aa).

Transmembrane regions (helical) follow at residues 28 to 48 (MIIMSALLLKSGAAPFHFWFP), 54 to 74 (LTWMNALMLMTWQKIAPLMLI), 79 to 99 (IKYLLLISVILSVIIGAIGGL), 107 to 127 (LMAFSSINHLGWMLSSLMFSE), 128 to 148 (SIWLIYFFFYSFLSFVLTFMF), 171 to 191 (FTLFMNFLSLGGLPPFLGFLP), 206 to 226 (FLLTLMMMSTLITLFFYLRIC), and 254 to 274 (LIMTFFSIFGLFMISLFYFMF).

The protein belongs to the complex I subunit 2 family.

It is found in the mitochondrion inner membrane. The catalysed reaction is a ubiquinone + NADH + 5 H(+)(in) = a ubiquinol + NAD(+) + 4 H(+)(out). Functionally, core subunit of the mitochondrial membrane respiratory chain NADH dehydrogenase (Complex I) that is believed to belong to the minimal assembly required for catalysis. Complex I functions in the transfer of electrons from NADH to the respiratory chain. The immediate electron acceptor for the enzyme is believed to be ubiquinone. This is NADH-ubiquinone oxidoreductase chain 2 (mt:ND2) from Drosophila sechellia (Fruit fly).